A 73-amino-acid polypeptide reads, in one-letter code: Small ribosomal subunit protein bS18 (73 aa).

Belongs to the bacterial ribosomal protein bS18 family. As to quaternary structure, part of the 30S ribosomal subunit. Forms a tight heterodimer with protein bS6.

Binds as a heterodimer with protein bS6 to the central domain of the 16S rRNA, where it helps stabilize the platform of the 30S subunit. The polypeptide is Small ribosomal subunit protein bS18 (Prochlorococcus marinus subsp. pastoris (strain CCMP1986 / NIES-2087 / MED4)).